The following is a 211-amino-acid chain: MIERTFVGENVSETLIDEYFKTKLVRAGYSHIDLKKTPIGTRITVFAEKPGFVIGRKGKMVKELTETLAKEYAVKNPQIEVKQVENPDLDPAIVGHKIASSLERGMHFRRTAHSAIRRVMGSGAKGVSIIVSGKLSGERSRTEKFMDGYMKHCGEPAEALVNKSHQLAKLKLGVVGVTVKIMKPDVTLPDEITILSGEIKEVTEYSEASQE.

The KH type-2 domain occupies 16–85 (IDEYFKTKLV…NPQIEVKQVE (70 aa)).

This sequence belongs to the universal ribosomal protein uS3 family. Part of the 30S ribosomal subunit.

Its function is as follows. Binds the lower part of the 30S subunit head. The protein is Small ribosomal subunit protein uS3 of Methanococcus maripaludis (strain C5 / ATCC BAA-1333).